Here is a 177-residue protein sequence, read N- to C-terminus: MSEIATVARPYAKAAFDFAVENQAVDKWQVMLAFTAEVARNEQVTELLSGSLASEKLADIFIDLCGDQIDEHAQNLIRVMAENDRLSTLPEVLSQFIQLRAVLESTVDVEVTSAIELTKQQLANISAAMEKRLSRKVKLNCKIDKSVIAGMIIRAGDLVIDGSVRGRLERLTDVLQS.

The protein belongs to the ATPase delta chain family. F-type ATPases have 2 components, F(1) - the catalytic core - and F(0) - the membrane proton channel. F(1) has five subunits: alpha(3), beta(3), gamma(1), delta(1), epsilon(1). F(0) has three main subunits: a(1), b(2) and c(10-14). The alpha and beta chains form an alternating ring which encloses part of the gamma chain. F(1) is attached to F(0) by a central stalk formed by the gamma and epsilon chains, while a peripheral stalk is formed by the delta and b chains.

It localises to the cell inner membrane. Functionally, f(1)F(0) ATP synthase produces ATP from ADP in the presence of a proton or sodium gradient. F-type ATPases consist of two structural domains, F(1) containing the extramembraneous catalytic core and F(0) containing the membrane proton channel, linked together by a central stalk and a peripheral stalk. During catalysis, ATP synthesis in the catalytic domain of F(1) is coupled via a rotary mechanism of the central stalk subunits to proton translocation. Its function is as follows. This protein is part of the stalk that links CF(0) to CF(1). It either transmits conformational changes from CF(0) to CF(1) or is implicated in proton conduction. The protein is ATP synthase subunit delta of Proteus mirabilis (strain HI4320).